The sequence spans 501 residues: uncharacterized protein (501 aa).

The helical transmembrane segment at 26 to 46 (ILLLLLGLIVLVNIGINVATM) threads the bilayer. Disordered regions lie at residues 316–384 (RGTE…VRRR) and 409–501 (EASH…EKLN). The segment covering 476–490 (RSSSLPPASTSTLRP) has biased composition (low complexity).

The protein localises to the membrane. This is an uncharacterized protein from Homo sapiens (Human).